Consider the following 193-residue polypeptide: Thymidine kinase (193 aa).

Residues 9-16 and 87-90 contribute to the ATP site; these read STMNAGKS and DEAQ. E88 serves as the catalytic Proton acceptor. Residues C145, C147, C182, and H185 each coordinate Zn(2+).

The protein belongs to the thymidine kinase family. In terms of assembly, homotetramer.

The protein localises to the cytoplasm. The enzyme catalyses thymidine + ATP = dTMP + ADP + H(+). This is Thymidine kinase from Haemophilus influenzae (strain ATCC 51907 / DSM 11121 / KW20 / Rd).